We begin with the raw amino-acid sequence, 547 residues long: Type I inositol polyphosphate 5-phosphatase 4 (547 aa).

The segment covering 56–67 (CSVRKSKTETRS) has biased composition (basic and acidic residues). The tract at residues 56-80 (CSVRKSKTETRSKRNSGRARRNKLD) is disordered. Catalytic regions lie at residues 387-402 (DRVI…IALS) and 467-482 (KRRT…WHGS).

The protein belongs to the inositol polyphosphate 5-phosphatase family.

In Arabidopsis thaliana (Mouse-ear cress), this protein is Type I inositol polyphosphate 5-phosphatase 4.